A 259-amino-acid polypeptide reads, in one-letter code: uncharacterized protein (259 aa).

Disordered stretches follow at residues 22–68, 111–133, and 181–202; these read GLQP…VSFG, REEQKLRKRSRQNDDGSDDDEVE, and LGGKKETEKMPMAARRGMKKKQ. A compositionally biased stretch (acidic residues) spans 50-63; that stretch reads NEEEDAISDMEDKE. Position 127 is a phosphoserine (Ser-127).

This is an uncharacterized protein from Schizosaccharomyces pombe (strain 972 / ATCC 24843) (Fission yeast).